The chain runs to 455 residues: Probable glycine dehydrogenase (decarboxylating) subunit 1 (455 aa).

This sequence belongs to the GcvP family. N-terminal subunit subfamily. The glycine cleavage system is composed of four proteins: P, T, L and H. In this organism, the P 'protein' is a heterodimer of two subunits.

It carries out the reaction N(6)-[(R)-lipoyl]-L-lysyl-[glycine-cleavage complex H protein] + glycine + H(+) = N(6)-[(R)-S(8)-aminomethyldihydrolipoyl]-L-lysyl-[glycine-cleavage complex H protein] + CO2. In terms of biological role, the glycine cleavage system catalyzes the degradation of glycine. The P protein binds the alpha-amino group of glycine through its pyridoxal phosphate cofactor; CO(2) is released and the remaining methylamine moiety is then transferred to the lipoamide cofactor of the H protein. This Francisella tularensis subsp. novicida (strain U112) protein is Probable glycine dehydrogenase (decarboxylating) subunit 1.